A 30-amino-acid chain; its full sequence is Snake venom serine protease (30 aa).

The Peptidase S1 domain occupies 1–30; the sequence is VIGGDECNINEHRFLVALYDPDGFLSGGIL.

Belongs to the peptidase S1 family. Snake venom subfamily. Monomer. In terms of processing, N-Glycosylated. As to expression, expressed by the venom gland.

The protein localises to the secreted. Its activity is regulated as follows. Inhibited by diisopropylfluorophosphate (DFP). In terms of biological role, snake venom serine protease that catalyzes the hydrolysis of arginine esters, kallikrein substrates Pro-Phe-Arg-MCA and Z-Phe-Arg-MCA. Cleaves kininogen analogs to release bradykinin. Induces contraction of the isolated rat uterus directly at high concentrations, but provokes more forceful contractions when injected in presence of bovine plasma. Shows capillary permeability-increasing activity and hypotensive activity on the anesthetized rat. In Crotalus viridis viridis (Prairie rattlesnake), this protein is Snake venom serine protease.